Here is a 544-residue protein sequence, read N- to C-terminus: Ell-associated factor Eaf (544 aa).

A disordered region spans residues 147–544 (QSVPMNMGHQ…LSSNSSDDDD (398 aa)). Residues 193-202 (SSKDKVDFKP) are compositionally biased toward basic and acidic residues. Ser205 bears the Phosphoserine mark. Residues 264–273 (SGSSTGSSSG) are compositionally biased toward low complexity. Over residues 287–299 (GKQRQAHGKRQQI) the composition is skewed to basic residues. Low complexity-rich tracts occupy residues 305 to 319 (PPVQ…QQQP), 333 to 374 (QPHP…QQRP), and 396 to 407 (ASQSVAQAAAVL). Over residues 425-440 (DSSDSDSGSDSDDSTE) the composition is skewed to acidic residues. Low complexity-rich tracts occupy residues 450 to 483 (EQQQ…HMNQ), 503 to 513 (QQPQPQPQQQQ), and 526 to 544 (NDLL…DDDD).

This sequence belongs to the EAF family.

It is found in the nucleus. In terms of biological role, promotes transcriptional elongation by Su(Tpl)/ELL. Essential for development. The polypeptide is Ell-associated factor Eaf (Drosophila persimilis (Fruit fly)).